The chain runs to 922 residues: MSSPIRNRLQLVVTLIFCLFFENVNGLNNFIDNFETLNYRATHVANQVTRRKRSIDSAASHYQEPIGFRFNAYNRTFHVQLHPIDDSLFHEDHMSDVDGGYADIKPSHFLYEGYLKDDPNSHVHGSVFDGVFEGHIQTGEGRRYSIDKAAKYFERDDRPTQYHSIIYRDDEINHRKWRVKRDAENLSEQMQGCGFSSRVRREMTDVQNSGESTDFFTNYMTMGGRSKRANTLRDHDGLYFVRTCSLYMQADHKLYEHIRMKEGNNDPIRTREEIVSLFYNHIKAVNEIYEGTNFNGIKGLHFVIQRTSIYTPDSCDRGRAKTDSDNPFCEENVDVSNFLNLNSQRNHSAFCLAYALTFRDFVGGTLGLAWVASPQFNTAGGICQVHQRYNEGSRGWVYRSLNTGIVTLVNYGNRVPARVSQLTLAHEIGHNFGSPHDFPAECQPGLPDGNFIMFASATSGDKPNNGKFSPCSVKNISAVLAVVLKSMPVDPTRNASPVGIGKRNCFQERTSAFCGNQIYEPGEECDCGFSQADCDQMGDKCCVPHEARGNGGPGPCKRKPGAQCSPSQGYCCNPDTCSLHGKNEEKICRQESECSNLQTCDGRNAQCPVSPPKHDGIPCQDSTKVCSSGQCNGSVCAMFGLEDCFLTEGKADELCFLACIKDGKCTSSVHLPEFSANRTNFLQNMRKDKPGLILHPGSPCNNYKGYCDIFRKCRSVDANGPLARLKNLLFNKRTIETLTQWAQDNWWVVGVGGLVFLVIMALFVKCCAVHTPSTNPNKPPALNIYQTLTRPGTLIRQHRQRHRAAAGSVPPGPGAQPRSGAASAPSRTTPSARPSAPPLVAPQVAVAVPPGVVGPPIPLIATHPGSSSSTPAVIVLEPPPPYTAADPGSAMGGPRRGHRKNKRQTSSDAAGSSGNGGKKKGK.

The N-terminal stretch at 1 to 26 (MSSPIRNRLQLVVTLIFCLFFENVNG) is a signal peptide. Residues 27 to 228 (LNNFIDNFET…YMTMGGRSKR (202 aa)) constitute a propeptide that is removed on maturation. 3 N-linked (GlcNAc...) asparagine glycosylation sites follow: asparagine 74, asparagine 185, and asparagine 346. Residues 229–745 (ANTLRDHDGL…ETLTQWAQDN (517 aa)) are Extracellular-facing. The 239-residue stretch at 242-480 (RTCSLYMQAD…CSVKNISAVL (239 aa)) folds into the Peptidase M12B domain. Residue histidine 426 participates in Zn(2+) binding. Glutamate 427 is an active-site residue. 2 residues coordinate Zn(2+): histidine 430 and histidine 436. Cysteine 442 and cysteine 471 form a disulfide bridge. An N-linked (GlcNAc...) asparagine glycan is attached at asparagine 475. The region spanning 511-615 (SAFCGNQIYE…QCPVSPPKHD (105 aa)) is the Disintegrin domain. Intrachain disulfides connect cysteine 542–cysteine 577, cysteine 564–cysteine 572, cysteine 588–cysteine 607, cysteine 594–cysteine 626, and cysteine 619–cysteine 631. Asparagine 632 carries an N-linked (GlcNAc...) asparagine glycan. Disulfide bonds link cysteine 636–cysteine 659, cysteine 644–cysteine 665, cysteine 655–cysteine 707, and cysteine 700–cysteine 713. Asparagine 677 carries an N-linked (GlcNAc...) asparagine glycan. The helical transmembrane segment at 746–766 (WWVVGVGGLVFLVIMALFVKC) threads the bilayer. Topologically, residues 767-922 (CAVHTPSTNP…SGNGGKKKGK (156 aa)) are cytoplasmic. Disordered stretches follow at residues 797 to 837 (QHRQ…PSAP) and 864 to 922 (PGSS…KKGK). The span at 805-834 (AAGSVPPGPGAQPRSGAASAPSRTTPSARP) shows a compositional bias: low complexity.

In terms of assembly, may interact with tetraspanin tsp-12; the interaction promotes sup-17 cell membrane localization. Zn(2+) is required as a cofactor. As to expression, expressed in the germline.

The protein localises to the cell membrane. The protein resides in the basolateral cell membrane. It is found in the cytoplasmic vesicle membrane. It catalyses the reaction Endopeptidase of broad specificity.. In terms of biological role, metalloprotease. Acts together with protease adm-4 and in a cell autonomous manner to facilitate lin-12/Notch signaling during developmental cell fate decision, including anchor cell/ventral uterine precursor cell decision and vulva precursor cell specification. By modulating glp-1/Notch signaling, plays a role in germline development. Probably by modulating BMP-like Sma/Mab signaling via the shedding of unc-40 ectodomain, involved in the regulation of body size and mesoderm development. Probably by shedding ephrin efn-4, regulates axon guidance of SDQL neuron during development. This is Disintegrin and metalloproteinase domain-containing protein 10 homolog from Caenorhabditis elegans.